Consider the following 317-residue polypeptide: tRNA(Ile)-lysidine synthase (317 aa).

An ATP-binding site is contributed by 30 to 35 (SGGSDS).

The protein belongs to the tRNA(Ile)-lysidine synthase family.

The protein localises to the cytoplasm. The enzyme catalyses cytidine(34) in tRNA(Ile2) + L-lysine + ATP = lysidine(34) in tRNA(Ile2) + AMP + diphosphate + H(+). Functionally, ligates lysine onto the cytidine present at position 34 of the AUA codon-specific tRNA(Ile) that contains the anticodon CAU, in an ATP-dependent manner. Cytidine is converted to lysidine, thus changing the amino acid specificity of the tRNA from methionine to isoleucine. This chain is tRNA(Ile)-lysidine synthase, found in Chlamydia caviae (strain ATCC VR-813 / DSM 19441 / 03DC25 / GPIC) (Chlamydophila caviae).